We begin with the raw amino-acid sequence, 715 residues long: Poly(A) polymerase alpha-A (715 aa).

ATP-binding positions include 82-84, Thr-91, 95-97, Asp-149, Lys-210, Tyr-219, and 228-229; these read FGP, DID, and GV. Asp-95, Asp-97, and Asp-149 together coordinate Mg(2+). The short motif at 472–489 is the Nuclear localization signal 1 element; it reads RKQLHQLQPSHVSPKKKK. Disordered regions lie at residues 510–543, 560–590, and 607–693; these read DSDNSMSVPSPTNATRTSPLNSSGLSQGNSPAAP, QNNSTENLGGSLNESIPESATHPGFSSTPKP, and KPVS…DLSD. Polar residues-rich tracts occupy residues 515-539 and 560-588; these read MSVPSPTNATRTSPLNSSGLSQGNS and QNNSTENLGGSLNESIPESATHPGFSSTP. The Nuclear localization signal 2 signature appears at 624–639; sequence KRTSSPSNEDSPKKNK. Residues 655 to 673 show a composition bias toward basic and acidic residues; the sequence is DQNKLETEELKEVHSEEKS. Residues 674-692 show a composition bias toward polar residues; sequence SSPVPGSLPFSQQSSTDLS.

This sequence belongs to the poly(A) polymerase family. In terms of assembly, monomer. Mg(2+) serves as cofactor. Mn(2+) is required as a cofactor.

The protein resides in the nucleus. It carries out the reaction RNA(n) + ATP = RNA(n)-3'-adenine ribonucleotide + diphosphate. Functionally, polymerase that creates the 3'-poly(A) tail of mRNA's. May acquire specificity through interaction with a cleavage and polyadenylation factor (CPSF). The polypeptide is Poly(A) polymerase alpha-A (papola-a) (Xenopus laevis (African clawed frog)).